The primary structure comprises 394 residues: GDP-mannose transporter (394 aa).

The Cytoplasmic portion of the chain corresponds to 1–55; sequence MADKKNEDFVVRMPDNGTVEKEPFLARSPPARARTGSGGGFGDSFSLARVANNPP. A helical transmembrane segment spans residues 56-76; that stretch reads AAILAYCLSSISMTVVNKYVV. Topologically, residues 77-80 are lumenal; it reads SGSE. Residues 81–101 form a helical membrane-spanning segment; that stretch reads WNLNFFYLAVQAIVCIIAILF. Over 102-121 the chain is Cytoplasmic; the sequence is CKQIGIITNLAPFDNVKAKK. A helical transmembrane segment spans residues 122-144; that stretch reads WFPVSLLLVGMIYTSTKALQFLS. Topologically, residues 145-149 are lumenal; that stretch reads VPVYT. A helical membrane pass occupies residues 150-167; sequence IFKNLTIIAIAYGEVLWF. The Cytoplasmic segment spans residues 168 to 173; sequence GGSVSP. A helical transmembrane segment spans residues 174 to 198; sequence LALVSFGLMVLSSVVAAWADIQSAI. At 199–213 the chain is on the lumenal side; sequence HGGSHPSEASTAIST. The helical transmembrane segment at 214-234 threads the bilayer; it reads LNAGYAWMGMNVFCSAAYLLG. The Cytoplasmic portion of the chain corresponds to 235–246; that stretch reads MRKVIHKMNFKD. Residues 247–267 traverse the membrane as a helical segment; it reads WDSMFYNNLLTIPVLIVCSLI. Over 268-287 the chain is Lumenal; sequence AEDWSAANLARNFPIESRNA. The helical transmembrane segment at 288–308 threads the bilayer; sequence LFIGMIYSGLGAIFISYCSAW. Topologically, residues 309–316 are cytoplasmic; that stretch reads CIRVTTST. A helical membrane pass occupies residues 317-339; it reads TYSMVGALNKLPIAISGLVFFSA. Over 340–342 the chain is Lumenal; the sequence is PVT. Residues 343–362 form a helical membrane-spanning segment; the sequence is FGSVSAIVIGFISGIVYAWA. Topologically, residues 363–394 are cytoplasmic; that stretch reads KARQSSQAKSALPTQQPVMSASSQSNKDASNS. The tract at residues 371 to 394 is disordered; it reads KSALPTQQPVMSASSQSNKDASNS. Positions 374–394 are enriched in polar residues; it reads LPTQQPVMSASSQSNKDASNS.

It belongs to the TPT transporter family. SLC35D subfamily. In terms of assembly, homooligomer.

It is found in the golgi apparatus membrane. Its subcellular location is the cytoplasmic vesicle membrane. The protein localises to the endoplasmic reticulum membrane. Functionally, involved in the import of GDP-mannose from the cytoplasm into the Golgi lumen. The polypeptide is GDP-mannose transporter (VRG4) (Pyricularia oryzae (strain 70-15 / ATCC MYA-4617 / FGSC 8958) (Rice blast fungus)).